Here is a 913-residue protein sequence, read N- to C-terminus: Eukaryotic translation initiation factor 3 subunit C (913 aa).

The disordered stretch occupies residues 1 to 22; the sequence is MSRFFANGSDSESESSEEEVQA. Acidic residues predominate over residues 11–20; sequence SESESSEEEV. A phosphoserine mark is found at Ser34, Ser165, Ser177, and Ser186. The interval 157–285 is disordered; it reads FREAPDQESD…KRAEDDEDGE (129 aa). Over residues 162-171 the composition is skewed to acidic residues; it reads DQESDVEEGE. Residues 172–184 are compositionally biased toward basic and acidic residues; it reads GEPHDSDGDRAGA. Residues 214–239 show a composition bias toward acidic residues; sequence DEDDSDDSIDWDSDTESETESSEDEN. A compositionally biased stretch (basic and acidic residues) spans 244-263; it reads MRERFLKRTTEKEDKDDDKR. Positions 264 to 276 are enriched in basic residues; sequence KDKRKEQKHKVRK. Residues 645–821 form the PCI domain; that stretch reads FHMHINLELL…ETVVMHRSEP (177 aa). Residues 856–913 form a disordered region; that stretch reads RGNMGNRDRGYNRNQNNQGGNWGGQRRDNRNQRNRNQRGHHKQQQQQQQQQVQTIEEE. Over residues 887 to 898 the composition is skewed to basic residues; sequence QRNRNQRGHHKQ.

The protein belongs to the eIF-3 subunit C family. As to quaternary structure, component of the eukaryotic translation initiation factor 3 (eIF-3) complex. The eIF-3 complex interacts with pix.

It localises to the cytoplasm. In terms of biological role, component of the eukaryotic translation initiation factor 3 (eIF-3) complex, which is involved in protein synthesis of a specialized repertoire of mRNAs and, together with other initiation factors, stimulates binding of mRNA and methionyl-tRNAi to the 40S ribosome. The eIF-3 complex specifically targets and initiates translation of a subset of mRNAs involved in cell proliferation. In Drosophila mojavensis (Fruit fly), this protein is Eukaryotic translation initiation factor 3 subunit C.